Here is a 353-residue protein sequence, read N- to C-terminus: Photosystem II D2 protein (353 aa).

T2 carries the post-translational modification N-acetylthreonine. Residue T2 is modified to Phosphothreonine. A helical transmembrane segment spans residues 41–61 (CAYFALGGWFTGTTFVTSWYT). H118 contributes to the chlorophyll a binding site. A helical membrane pass occupies residues 125–141 (GFMLRQFELARSVQLRP). Pheophytin a-binding residues include Q130 and N143. The helical transmembrane segment at 153-166 (VFVSVFLIYPLGQS) threads the bilayer. H198 serves as a coordination point for chlorophyll a. A helical membrane pass occupies residues 208 to 228 (AALLCAIHGATVENTLFEDGD). 2 residues coordinate a plastoquinone: H215 and F262. H215 contacts Fe cation. H269 serves as a coordination point for Fe cation. A helical membrane pass occupies residues 279–295 (GLWMSALGVVGLALNLR).

This sequence belongs to the reaction center PufL/M/PsbA/D family. PSII is composed of 1 copy each of membrane proteins PsbA, PsbB, PsbC, PsbD, PsbE, PsbF, PsbH, PsbI, PsbJ, PsbK, PsbL, PsbM, PsbT, PsbX, PsbY, PsbZ, Psb30/Ycf12, at least 3 peripheral proteins of the oxygen-evolving complex and a large number of cofactors. It forms dimeric complexes. The cofactor is The D1/D2 heterodimer binds P680, chlorophylls that are the primary electron donor of PSII, and subsequent electron acceptors. It shares a non-heme iron and each subunit binds pheophytin, quinone, additional chlorophylls, carotenoids and lipids. There is also a Cl(-1) ion associated with D1 and D2, which is required for oxygen evolution. The PSII complex binds additional chlorophylls, carotenoids and specific lipids..

The protein resides in the plastid. It localises to the chloroplast thylakoid membrane. It carries out the reaction 2 a plastoquinone + 4 hnu + 2 H2O = 2 a plastoquinol + O2. Its function is as follows. Photosystem II (PSII) is a light-driven water:plastoquinone oxidoreductase that uses light energy to abstract electrons from H(2)O, generating O(2) and a proton gradient subsequently used for ATP formation. It consists of a core antenna complex that captures photons, and an electron transfer chain that converts photonic excitation into a charge separation. The D1/D2 (PsbA/PsbD) reaction center heterodimer binds P680, the primary electron donor of PSII as well as several subsequent electron acceptors. D2 is needed for assembly of a stable PSII complex. This chain is Photosystem II D2 protein, found in Olimarabidopsis pumila (Dwarf rocket).